The chain runs to 309 residues: Serine/threonine-protein phosphatase 2A catalytic subunit alpha isoform (309 aa).

Positions 57, 59, 85, and 117 each coordinate Mn(2+). Residues aspartate 57, histidine 59, and aspartate 85 each contribute to the Zn(2+) site. Residues aspartate 85 and asparagine 117 each contribute to the Fe(3+) site. Histidine 118 functions as the Proton donor in the catalytic mechanism. Residues histidine 167 and histidine 241 each coordinate Mn(2+). Residues histidine 167 and histidine 241 each contribute to the Fe(3+) site. Tyrosine 307 carries the phosphotyrosine modification. Leucine 309 carries the post-translational modification Leucine methyl ester.

This sequence belongs to the PPP phosphatase family. PP-1 subfamily. PP2A consists of a common heterodimeric core enzyme composed of PPP2CA, a 36 kDa catalytic subunit (subunit C), and PPP2R1A, a 65 kDa constant regulatory subunit (PR65 or subunit A), that associates with a variety of regulatory subunits. Proteins that associate with the core dimer include three families of regulatory subunits B (the R2/B/PR55/B55, R3/B''/PR72/PR130/PR59 and R5/B'/B56 families), the 48 kDa variable regulatory subunit, viral proteins, and cell signaling molecules. Interacts with the PP2A A subunit PPP2R1A. Interacts with the regulatory subunit PPP2R2A. Interacts (via C-terminus) with PTPA. Interacts with NXN; the interaction is direct. Interacts with KCTD20. Interacts with BTBD10. Interacts with SGO1 and SGO2. Interacts with RAF1. Interaction with IGBP1 protects unassembled PPP2CA from degradative ubiquitination. Interacts with GSK3B (via C2 domain). Interacts with MFHAS1; retains PPP2CA into the cytoplasm and excludes it from the nucleus. Interacts with PABIR1/FAM122A. Interacts with ADCY8; interaction is phosphatase activity-dependent; antagonizes interaction between ADCY8 and calmodulin. Interacts with CRTC3 (when phosphorylated at 'Ser-391'). Interacts with SPRY2; the interaction is inhibited by TESK1 interaction with SPRY2, possibly by vesicular sequestration of SPRY2. Interacts with TRAF3IP3. Interacts with AMBRA1 (via PxP motifs); enhancing interaction between PPP2CA and MYC or FOXO3. Forms a complex with AMBRA1 and BECN1; AMBRA1 and BECN1 components of the complex regulate MYC stability via different pathways. Part of the core of STRIPAK complexes composed of PP2A catalytic and scaffolding subunits, the striatins (PP2A regulatory subunits), the striatin-associated proteins MOB4, STRIP1 and STRIP2, PDCD10 and members of the STE20 kinases, such as STK24 and STK26. Phosphatase component of the Integrator-PP2A (INTAC) complex, composed of the Integrator core complex and protein phosphatase 2A subunits PPP2CA and PPP2R1A. Mn(2+) is required as a cofactor. Fe(3+) serves as cofactor. The cofactor is Zn(2+). Reversibly methyl esterified on Leu-309 by leucine carboxyl methyltransferase 1 (LCMT1) and protein phosphatase methylesterase 1 (PPME1). Carboxyl methylation influences the affinity of the catalytic subunit for the different regulatory subunits, thereby modulating the PP2A holoenzyme's substrate specificity, enzyme activity and cellular localization. Post-translationally, phosphorylation of either threonine (by autophosphorylation-activated protein kinase) or tyrosine results in inactivation of the phosphatase. Auto-dephosphorylation has been suggested as a mechanism for reactivation. In terms of processing, polyubiquitinated, leading to its degradation by the proteasome.

Its subcellular location is the cytoplasm. It localises to the nucleus. The protein localises to the chromosome. It is found in the centromere. The protein resides in the cytoskeleton. Its subcellular location is the spindle pole. The enzyme catalyses O-phospho-L-seryl-[protein] + H2O = L-seryl-[protein] + phosphate. It carries out the reaction O-phospho-L-threonyl-[protein] + H2O = L-threonyl-[protein] + phosphate. Its activity is regulated as follows. Inhibited by the interaction between PPP2R2A and ARPP19; this inhibition is enhanced when ARPP19 is phosphorylated. Inhibited by the interaction between PPP2R2A and PABIR1/FAM122A. In terms of biological role, catalytic subunit of protein phosphatase 2A (PP2A), a serine/threonine phosphatase involved in the regulation of a wide variety of enzymes, signal transduction pathways, and cellular events. PP2A is the major phosphatase for microtubule-associated proteins (MAPs). PP2A can modulate the activity of phosphorylase B kinase casein kinase 2, mitogen-stimulated S6 kinase, and MAP-2 kinase. Cooperates with SGO2 to protect centromeric cohesin from separase-mediated cleavage in oocytes specifically during meiosis I. Can dephosphorylate various proteins, such as SV40 large T antigen, AXIN1, p53/TP53, PIM3, WEE1. Activates RAF1 by dephosphorylating it at 'Ser-259'. Mediates dephosphorylation of WEE1, preventing its ubiquitin-mediated proteolysis, increasing WEE1 protein levels, and promoting the G2/M checkpoint. Mediates dephosphorylation of MYC; promoting its ubiquitin-mediated proteolysis: interaction with AMBRA1 enhances interaction between PPP2CA and MYC. Mediates dephosphorylation of FOXO3; promoting its stabilization: interaction with AMBRA1 enhances interaction between PPP2CA and FOXO3. Catalyzes dephosphorylation of the pyrin domain of NLRP3, promoting assembly of the NLRP3 inflammasome. Together with RACK1 adapter, mediates dephosphorylation of AKT1 at 'Ser-473', preventing AKT1 activation and AKT-mTOR signaling pathway. Dephosphorylation of AKT1 is essential for regulatory T-cells (Treg) homeostasis and stability. Catalyzes dephosphorylation of PIM3, promotinh PIM3 ubiquitination and proteasomal degradation. Part of the striatin-interacting phosphatase and kinase (STRIPAK) complexes. STRIPAK complexes have critical roles in protein (de)phosphorylation and are regulators of multiple signaling pathways including Hippo, MAPK, nuclear receptor and cytoskeleton remodeling. Different types of STRIPAK complexes are involved in a variety of biological processes such as cell growth, differentiation, apoptosis, metabolism and immune regulation. Key mediator of a quality checkpoint during transcription elongation as part of the Integrator-PP2A (INTAC) complex. The INTAC complex drives premature transcription termination of transcripts that are unfavorably configured for transcriptional elongation: within the INTAC complex, PPP2CA catalyzes dephosphorylation of the C-terminal domain (CTD) of Pol II subunit POLR2A/RPB1 and SUPT5H/SPT5, thereby preventing transcriptional elongation. The polypeptide is Serine/threonine-protein phosphatase 2A catalytic subunit alpha isoform (PPP2CA) (Homo sapiens (Human)).